Reading from the N-terminus, the 497-residue chain is ATP synthase subunit alpha 2 (497 aa).

An ATP-binding site is contributed by G167–T174.

This sequence belongs to the ATPase alpha/beta chains family. In terms of assembly, F-type ATPases have 2 components, CF(1) - the catalytic core - and CF(0) - the membrane proton channel. CF(1) has five subunits: alpha(3), beta(3), gamma(1), delta(1), epsilon(1). CF(0) has four main subunits: a(1), b(1), b'(1) and c(9-12).

The protein resides in the cell inner membrane. The catalysed reaction is ATP + H2O + 4 H(+)(in) = ADP + phosphate + 5 H(+)(out). Its function is as follows. Produces ATP from ADP in the presence of a proton gradient across the membrane. The alpha chain is a regulatory subunit. The sequence is that of ATP synthase subunit alpha 2 from Cereibacter sphaeroides (strain ATCC 17029 / ATH 2.4.9) (Rhodobacter sphaeroides).